The following is a 398-amino-acid chain: Histidinol-phosphate aminotransferase (398 aa).

Residues Met1 to Pro10 are compositionally biased toward polar residues. The segment at Met1–Pro30 is disordered. Position 234 is an N6-(pyridoxal phosphate)lysine (Lys234).

Belongs to the class-II pyridoxal-phosphate-dependent aminotransferase family. Histidinol-phosphate aminotransferase subfamily. In terms of assembly, homodimer. It depends on pyridoxal 5'-phosphate as a cofactor.

It catalyses the reaction L-histidinol phosphate + 2-oxoglutarate = 3-(imidazol-4-yl)-2-oxopropyl phosphate + L-glutamate. The protein operates within amino-acid biosynthesis; L-histidine biosynthesis; L-histidine from 5-phospho-alpha-D-ribose 1-diphosphate: step 7/9. In Mycobacterium avium (strain 104), this protein is Histidinol-phosphate aminotransferase.